Reading from the N-terminus, the 258-residue chain is Acetylglutamate kinase (258 aa).

Substrate is bound by residues 40 to 41 (GG), arginine 62, and asparagine 158.

It belongs to the acetylglutamate kinase family. ArgB subfamily.

The protein localises to the cytoplasm. The enzyme catalyses N-acetyl-L-glutamate + ATP = N-acetyl-L-glutamyl 5-phosphate + ADP. It participates in amino-acid biosynthesis; L-arginine biosynthesis; N(2)-acetyl-L-ornithine from L-glutamate: step 2/4. Functionally, catalyzes the ATP-dependent phosphorylation of N-acetyl-L-glutamate. The chain is Acetylglutamate kinase from Azobacteroides pseudotrichonymphae genomovar. CFP2.